The sequence spans 615 residues: 1-deoxy-D-xylulose-5-phosphate synthase (615 aa).

Residues His77 and 118–120 each bind thiamine diphosphate; that span reads GHS. Asp149 contacts Mg(2+). Thiamine diphosphate is bound by residues 150–151, Asn178, Tyr286, and Glu367; that span reads GA. Asn178 is a binding site for Mg(2+).

The protein belongs to the transketolase family. DXPS subfamily. As to quaternary structure, homodimer. The cofactor is Mg(2+). Thiamine diphosphate is required as a cofactor.

It carries out the reaction D-glyceraldehyde 3-phosphate + pyruvate + H(+) = 1-deoxy-D-xylulose 5-phosphate + CO2. Its pathway is metabolic intermediate biosynthesis; 1-deoxy-D-xylulose 5-phosphate biosynthesis; 1-deoxy-D-xylulose 5-phosphate from D-glyceraldehyde 3-phosphate and pyruvate: step 1/1. Functionally, catalyzes the acyloin condensation reaction between C atoms 2 and 3 of pyruvate and glyceraldehyde 3-phosphate to yield 1-deoxy-D-xylulose-5-phosphate (DXP). The sequence is that of 1-deoxy-D-xylulose-5-phosphate synthase from Glaesserella parasuis serovar 5 (strain SH0165) (Haemophilus parasuis).